A 165-amino-acid chain; its full sequence is Nucleotide-binding protein Ccur92_01650 (165 aa).

The protein belongs to the YajQ family.

Its function is as follows. Nucleotide-binding protein. The chain is Nucleotide-binding protein Ccur92_01650 from Campylobacter curvus (strain 525.92).